The following is a 123-amino-acid chain: Ig heavy chain V region HPCG14 (123 aa).

One can recognise an Ig-like domain in the interval 1-114; it reads EVKLVESGGG…GYDYWFDVWG (114 aa).

In Mus musculus (Mouse), this protein is Ig heavy chain V region HPCG14.